A 114-amino-acid polypeptide reads, in one-letter code: Large ribosomal subunit protein uL22 (114 aa).

It belongs to the universal ribosomal protein uL22 family. As to quaternary structure, part of the 50S ribosomal subunit.

Functionally, this protein binds specifically to 23S rRNA; its binding is stimulated by other ribosomal proteins, e.g. L4, L17, and L20. It is important during the early stages of 50S assembly. It makes multiple contacts with different domains of the 23S rRNA in the assembled 50S subunit and ribosome. In terms of biological role, the globular domain of the protein is located near the polypeptide exit tunnel on the outside of the subunit, while an extended beta-hairpin is found that lines the wall of the exit tunnel in the center of the 70S ribosome. This is Large ribosomal subunit protein uL22 from Streptococcus uberis (strain ATCC BAA-854 / 0140J).